The sequence spans 162 residues: Regulator of ribonuclease activity A (162 aa).

This sequence belongs to the RraA family. Homotrimer. Binds to both RNA-binding sites in the C-terminal region of Rne and to RhlB.

It localises to the cytoplasm. Functionally, globally modulates RNA abundance by binding to RNase E (Rne) and regulating its endonucleolytic activity. Can modulate Rne action in a substrate-dependent manner by altering the composition of the degradosome. Modulates RNA-binding and helicase activities of the degradosome. The chain is Regulator of ribonuclease activity A from Haemophilus influenzae (strain 86-028NP).